A 179-amino-acid chain; its full sequence is Shikimate kinase (179 aa).

Residue Gly-14–Thr-19 participates in ATP binding. A Mg(2+)-binding site is contributed by Thr-18. Asp-36, Arg-60, and Gly-82 together coordinate substrate. Arg-120 lines the ATP pocket. A substrate-binding site is contributed by Arg-139.

Belongs to the shikimate kinase family. As to quaternary structure, monomer. The cofactor is Mg(2+).

Its subcellular location is the cytoplasm. It carries out the reaction shikimate + ATP = 3-phosphoshikimate + ADP + H(+). It functions in the pathway metabolic intermediate biosynthesis; chorismate biosynthesis; chorismate from D-erythrose 4-phosphate and phosphoenolpyruvate: step 5/7. Catalyzes the specific phosphorylation of the 3-hydroxyl group of shikimic acid using ATP as a cosubstrate. The chain is Shikimate kinase from Methylococcus capsulatus (strain ATCC 33009 / NCIMB 11132 / Bath).